Here is a 568-residue protein sequence, read N- to C-terminus: MFS-type efflux transporter phmH (568 aa).

Over residues 1 to 11 the composition is skewed to polar residues; it reads MVSGTDTTEVG. Residues 1-39 form a disordered region; that stretch reads MVSGTDTTEVGATTKAPPSEGTEGILDDHSSNSQPQAEK. Helical transmembrane passes span 45 to 65, 101 to 121, 134 to 154, 161 to 181, 199 to 219, 237 to 257, and 268 to 288; these read YPLS…VSAL, YVMI…GGSS, GIGA…LVPM, IGLL…VGGI, IFYI…LFLH, VIGN…LTYG, and IAAP…WEMS. An N-linked (GlcNAc...) asparagine glycan is attached at N303. Transmembrane regions (helical) follow at residues 307–327, 344–364, 372–392, 399–419, 437–457, and 515–535; these read AAAF…NFFY, VYTL…GAIV, TVHL…SILD, EWVI…STTL, TWSF…AAIF, and IGIV…EIHL. Residue N563 is glycosylated (N-linked (GlcNAc...) asparagine).

The protein belongs to the major facilitator superfamily.

Its subcellular location is the cell membrane. MFS-type efflux transporter; part of the gene cluster that mediates the biosynthesis of thethe mycotoxins phomacins, leucine-derived cytochalasans with potent actin polymerization-inhibitory activities and monocot-specific antigerminative activities. PhmH might be involved in the excretion of phomacins. The polypeptide is MFS-type efflux transporter phmH (Phaeosphaeria nodorum (strain SN15 / ATCC MYA-4574 / FGSC 10173) (Glume blotch fungus)).